A 309-amino-acid chain; its full sequence is Protein FdhE (309 aa).

It belongs to the FdhE family.

The protein resides in the cytoplasm. Functionally, necessary for formate dehydrogenase activity. The chain is Protein FdhE from Escherichia coli O139:H28 (strain E24377A / ETEC).